The following is a 104-amino-acid chain: Nucleoid-associated protein Dtur_0258 (104 aa).

Residues 84–104 (EKSAEKMGSLTDGLPLPPGLF) are disordered.

Belongs to the YbaB/EbfC family. Homodimer.

Its subcellular location is the cytoplasm. It localises to the nucleoid. Binds to DNA and alters its conformation. May be involved in regulation of gene expression, nucleoid organization and DNA protection. In Dictyoglomus turgidum (strain DSM 6724 / Z-1310), this protein is Nucleoid-associated protein Dtur_0258.